The chain runs to 356 residues: MSGKELRYGFTTGACAAAAVKAAAQMLRDQAMVREVELMLPCGIGANFQVHGGVLRDNTASCYVVKDAGDDPDVTNGAEIHVTASIEFFTKNEIKIEGGTGIGRVTKPGLAVPVGAWAINPVPRSMILEVVKEVFALRCIPATLTFSISIPNGEELAKRTLNERLGIVGGLSILGTTGIVKPISAKAWTDTVDASVDVALACGARTVVLATGRSSEIVAQKHLSLSEEAFVMMGDHFGYAMRSCASKGVPEVVVAGQFAKLVKIACGHEQTHVTSSQMDLDALAWWLREVPATAHLEQMAREANTARHLLEASGYNKALIELVCSRVLKVCADVAPWMKARVMLAGYHGDLLYFSP.

Belongs to the CbiD family.

It carries out the reaction Co-precorrin-5B + S-adenosyl-L-methionine = Co-precorrin-6A + S-adenosyl-L-homocysteine. It functions in the pathway cofactor biosynthesis; adenosylcobalamin biosynthesis; cob(II)yrinate a,c-diamide from sirohydrochlorin (anaerobic route): step 6/10. Catalyzes the methylation of C-1 in cobalt-precorrin-5B to form cobalt-precorrin-6A. The protein is Cobalt-precorrin-5B C(1)-methyltransferase of Geobacter sp. (strain M21).